Here is a 151-residue protein sequence, read N- to C-terminus: MDNIKLQKLTESISESDFGLSFKHTAYFNPRLRTTGGRYLLGSHDIEINPKQFEKFGETALIDIIKHELCHYHLHIQRKGYKHKDADFKKLSQKVGAPRFCAAIENYEERANYIYKCLGCGETFKRIRKVNTRKMVCGKCKGKLHLHKHIK.

In terms of domain architecture, SprT-like spans Q7–H147. Residue H67 coordinates Zn(2+). E68 is an active-site residue. Zn(2+) is bound at residue H71.

The protein belongs to the SprT family. Requires Zn(2+) as cofactor.

The protein resides in the cytoplasm. This Staphylococcus carnosus (strain TM300) protein is Protein SprT-like.